A 492-amino-acid chain; its full sequence is Probable cytosol aminopeptidase (492 aa).

Mn(2+)-binding residues include Lys-262 and Asp-267. Lys-274 is a catalytic residue. Mn(2+) contacts are provided by Asp-286, Asp-345, and Glu-347. The active site involves Arg-349.

This sequence belongs to the peptidase M17 family. Mn(2+) is required as a cofactor.

The protein resides in the cytoplasm. It carries out the reaction Release of an N-terminal amino acid, Xaa-|-Yaa-, in which Xaa is preferably Leu, but may be other amino acids including Pro although not Arg or Lys, and Yaa may be Pro. Amino acid amides and methyl esters are also readily hydrolyzed, but rates on arylamides are exceedingly low.. It catalyses the reaction Release of an N-terminal amino acid, preferentially leucine, but not glutamic or aspartic acids.. Presumably involved in the processing and regular turnover of intracellular proteins. Catalyzes the removal of unsubstituted N-terminal amino acids from various peptides. The chain is Probable cytosol aminopeptidase from Acaryochloris marina (strain MBIC 11017).